The chain runs to 663 residues: 72 kDa type IV collagenase (663 aa).

Residues 1–26 form the signal peptide; the sequence is MKTHSVFGFFFKVLLIQVYLFNKTLA. Positions 27–106 are cleaved as a propeptide — activation peptide; it reads APSPIIKFPG…PRCGNPDVAN (80 aa). Positions 97 to 104 match the Cysteine switch motif; that stretch reads PRCGNPDV. Cysteine 99 contributes to the Zn(2+) binding site. The segment at 107-218 is collagenase-like 1; sequence YNFFPRKPKW…LWTLGEGQVV (112 aa). Ca(2+) is bound by residues aspartate 131 and aspartate 165. Zn(2+) contacts are provided by histidine 175 and aspartate 177. Residues aspartate 182 and glycine 183 each coordinate Ca(2+). Histidine 190 is a Zn(2+) binding site. Glycine 197, glycine 199, and aspartate 201 together coordinate Ca(2+). Histidine 203 provides a ligand contact to Zn(2+). Positions 205, 206, and 208 each coordinate Ca(2+). The segment at 219 to 393 is collagen-binding; that stretch reads RVKYGNADGE…WGFCPDQGYS (175 aa). 3 consecutive Fibronectin type-II domains span residues 225–273, 283–331, and 341–389; these read ADGE…FCPH, GDGQ…FCPE, and SEGA…FCPD. Cystine bridges form between cysteine 230-cysteine 256, cysteine 244-cysteine 271, cysteine 288-cysteine 314, cysteine 302-cysteine 329, cysteine 346-cysteine 372, and cysteine 360-cysteine 387. A collagenase-like 2 region spans residues 394 to 468; sequence LFLVAAHEFG…GPRPTLGPVT (75 aa). Histidine 400 provides a ligand contact to Zn(2+). The active site involves glutamate 401. 2 residues coordinate Zn(2+): histidine 404 and histidine 410. A disordered region spans residues 445 to 464; the sequence is SPDVEPGPGPGPGPGPRPTL. The segment covering 449-463 has biased composition (pro residues); the sequence is EPGPGPGPGPGPRPT. A disulfide bond links cysteine 472 and cysteine 663. Hemopexin repeat units follow at residues 475-519, 520-566, 568-616, and 617-663; these read DIVF…WPDL, PEKI…GLPP, VQRI…WNGV, and PDNL…WLGC. Positions 479, 524, 572, and 621 each coordinate Ca(2+).

The protein belongs to the peptidase M10A family. As to quaternary structure, ligand for integrin alpha-V/beta-3. Ca(2+) is required as a cofactor. Requires Zn(2+) as cofactor. In terms of processing, the propeptide is processed by MMP14 (MT-MMP1) and MMP16 (MT-MMP3). As to expression, produced by normal skin fibroblasts.

The protein localises to the secreted. It is found in the extracellular space. Its subcellular location is the extracellular matrix. The catalysed reaction is Cleavage of gelatin type I and collagen types IV, V, VII, X. Cleaves the collagen-like sequence Pro-Gln-Gly-|-Ile-Ala-Gly-Gln.. The polypeptide is 72 kDa type IV collagenase (MMP2) (Gallus gallus (Chicken)).